Consider the following 181-residue polypeptide: Peptide deformylase (181 aa).

Residues C103 and H145 each coordinate Fe cation. E146 is a catalytic residue. A Fe cation-binding site is contributed by H149.

This sequence belongs to the polypeptide deformylase family. Requires Fe(2+) as cofactor.

It catalyses the reaction N-terminal N-formyl-L-methionyl-[peptide] + H2O = N-terminal L-methionyl-[peptide] + formate. In terms of biological role, removes the formyl group from the N-terminal Met of newly synthesized proteins. Requires at least a dipeptide for an efficient rate of reaction. N-terminal L-methionine is a prerequisite for activity but the enzyme has broad specificity at other positions. The polypeptide is Peptide deformylase (Orientia tsutsugamushi (strain Ikeda) (Rickettsia tsutsugamushi)).